We begin with the raw amino-acid sequence, 362 residues long: Ferredoxin--NADP reductase 1 (362 aa).

FAD is bound by residues aspartate 47, glutamine 55, tyrosine 60, alanine 100, phenylalanine 141, aspartate 309, and serine 350.

This sequence belongs to the ferredoxin--NADP reductase type 2 family. In terms of assembly, homodimer. Requires FAD as cofactor.

It catalyses the reaction 2 reduced [2Fe-2S]-[ferredoxin] + NADP(+) + H(+) = 2 oxidized [2Fe-2S]-[ferredoxin] + NADPH. In Cupriavidus pinatubonensis (strain JMP 134 / LMG 1197) (Cupriavidus necator (strain JMP 134)), this protein is Ferredoxin--NADP reductase 1.